We begin with the raw amino-acid sequence, 701 residues long: Octapeptide-repeat antigen (701 aa).

N40, N41, N76, N111, N127, N139, N181, N189, N311, N334, N344, N477, and N557 each carry an N-linked (GlcNAc...) asparagine glycan. Residues 120–140 (IENEEKSNGSRKSSNKQKYNE) are disordered. The interval 641-701 (LSGSSTGSMN…IKSGSKDHIK (61 aa)) is disordered. A compositionally biased stretch (low complexity) spans 642–655 (SGSSTGSMNNGKSG). 6 repeat units span residues 653 to 660 (KSGSKSDI), 661 to 668 (KGGSKDDI), 669 to 676 (KSGSKDDI), 677 to 684 (KSGSKADI), 685 to 692 (KSGSKDDI), and 693 to 700 (KSGSKDHI). The interval 653–700 (KSGSKSDIKGGSKDDIKSGSKDDIKSGSKADIKSGSKDDIKSGSKDHI) is 6 X 8 AA approximate tandem repeats. The segment covering 656-701 (SKSDIKGGSKDDIKSGSKDDIKSGSKADIKSGSKDDIKSGSKDHIK) has biased composition (basic and acidic residues).

Belongs to the ATP-dependent AMP-binding enzyme family.

It is found in the parasitophorous vacuole. This is Octapeptide-repeat antigen from Plasmodium falciparum (isolate NF7 / Ghana).